A 148-amino-acid polypeptide reads, in one-letter code: uncharacterized protein (148 aa).

Residues Met-1–Ser-22 form the signal peptide.

This is an uncharacterized protein from Saccharomyces cerevisiae (strain ATCC 204508 / S288c) (Baker's yeast).